The sequence spans 372 residues: Protein-glutamate methylesterase/protein-glutamine glutaminase (372 aa).

The region spanning 5 to 123 (RVLIVDDSAL…SANLTTVSET (119 aa)) is the Response regulatory domain. A 4-aspartylphosphate modification is found at Asp56. The segment covering 140–151 (GTRSTDTTNSFS) has biased composition (polar residues). Residues 140–177 (GTRSTDTTNSFSEPFKSTIPKPMTAAEPQKEEKPTPQR) are disordered. Residues 167–177 (PQKEEKPTPQR) are compositionally biased toward basic and acidic residues. Residues 178–364 (EHGNIQIIAI…VSLDNMAAAI (187 aa)) enclose the CheB-type methylesterase domain. Residues Ser190, His217, and Asp313 contribute to the active site.

The protein belongs to the CheB family. Phosphorylated by CheA. Phosphorylation of the N-terminal regulatory domain activates the methylesterase activity.

It localises to the cytoplasm. It catalyses the reaction [protein]-L-glutamate 5-O-methyl ester + H2O = L-glutamyl-[protein] + methanol + H(+). The enzyme catalyses L-glutaminyl-[protein] + H2O = L-glutamyl-[protein] + NH4(+). In terms of biological role, involved in chemotaxis. Part of a chemotaxis signal transduction system that modulates chemotaxis in response to various stimuli. Catalyzes the demethylation of specific methylglutamate residues introduced into the chemoreceptors (methyl-accepting chemotaxis proteins or MCP) by CheR. Also mediates the irreversible deamidation of specific glutamine residues to glutamic acid. The protein is Protein-glutamate methylesterase/protein-glutamine glutaminase of Treponema denticola (strain ATCC 35405 / DSM 14222 / CIP 103919 / JCM 8153 / KCTC 15104).